The primary structure comprises 324 residues: DGAT1/2-independent enzyme synthesizing storage lipids (324 aa).

At 1-50 (MIDKNQTCGVGQDSVPYMICLIHILEEWFGVEQLEDYLNFANYLLWVFTP) the chain is on the lumenal side. N-linked (GlcNAc...) asparagine glycosylation is present at Asn5. Residues 51–71 (LILLILPYFTIFLLYLTIIFL) traverse the membrane as a helical segment. Residues 72 to 125 (HIYKRKNVLKEAYSHNLWDGARKTVATLWDGHAAVWHGYEVHGMEKIPEDGPAL) lie on the Cytoplasmic side of the membrane. Residues 126–146 (IIFYHGAIPIDFYYFMAKIFI) traverse the membrane as a helical segment. His130 is an active-site residue. Topologically, residues 147-324 (HKGRTCRVVA…IMSALLERFH (178 aa)) are lumenal.

It belongs to the diacylglycerol acyltransferase family. Highly divergent.

It is found in the endoplasmic reticulum membrane. It carries out the reaction a 1,2-diacylglycerol + a 1,2-diacyl-sn-glycero-3-phosphocholine = a triacylglycerol + a 1-acyl-sn-glycero-3-phosphocholine. The catalysed reaction is a 1-O-alkyl-2-acyl-sn-glycero-3-phosphocholine + a 1,2-diacylglycerol = a 1-O-alkyl-sn-glycero-3-phosphocholine + a triacylglycerol. It catalyses the reaction a 2-acylglycerol + an acyl-CoA = a 1,2-diacylglycerol + CoA. The enzyme catalyses an acyl-CoA + a 1,2-diacyl-sn-glycerol = a triacyl-sn-glycerol + CoA. It carries out the reaction 2-(9Z-octadecenoyl)-glycerol + (9Z)-octadecenoyl-CoA = 1,2-di-(9Z-octadecenoyl)-glycerol + CoA. The catalysed reaction is 1,2-di-(9Z-octadecenoyl)-sn-glycerol + (9Z)-octadecenoyl-CoA = 1,2,3-tri-(9Z-octadecenoyl)-glycerol + CoA. Its activity is regulated as follows. Acyltransferase activity is specifically inhibited by TMX1 at the endoplasmic reticulum, restricting accumulation of triacylglycerol. Catalytic subunit of the alternative triglyceride biosynthesis pathway, which mediates formation of triacylglycerol from diacylglycerol and membrane phospholipids. Synthesizes triacylglycerol at the expense of membrane phospholipids, such as phosphatidylcholine (PC) and its ether-linked form (ePC), thereby altering the composition of membranes. The alternative triglyceride biosynthesis pathway is probably required to provide the energy required for rapid growth when fuel sources are limiting. It maintains mitochondrial function during periods of extracellular lipid starvation. Can also use acyl-CoA as donor: acts as a acyl-CoA:monoacylglycerol acyltransferase (MGAT), but also shows acyl-CoA:diacylglycerol acyltransferase (DGAT) activity. The chain is DGAT1/2-independent enzyme synthesizing storage lipids from Homo sapiens (Human).